A 2460-amino-acid polypeptide reads, in one-letter code: Reducing polyketide synthase BOA6 (2460 aa).

Residues 5-438 enclose the Ketosynthase family 3 (KS3) domain; it reads NEPIAVIGTG…GTNAHAILES (434 aa). Residues C178, H317, and H360 each act as for beta-ketoacyl synthase activity in the active site. The interval 549–864 is malonyl-CoA:ACP transacylase (MAT) domain; sequence VFTGQGAQWP…PYTGVLSRGD (316 aa). Residues 938 to 1073 form an N-terminal hotdog fold region; the sequence is HELLGVRCAD…GRIKMTLGTP (136 aa). Residues 938–1244 form a dehydratase (DH) domain region; it reads HELLGVRCAD…QMQSFTAARP (307 aa). Residues 938–1245 form the PKS/mFAS DH domain; it reads HELLGVRCAD…MQSFTAARPS (308 aa). H970 functions as the Proton acceptor; for dehydratase activity in the catalytic mechanism. Residues 1088-1245 form a C-terminal hotdog fold region; that stretch reads LGPLNVDRFY…MQSFTAARPS (158 aa). Residue D1145 is the Proton donor; for dehydratase activity of the active site. A methyltransferase (MT) domain region spans residues 1399 to 1586; the sequence is NKFVTAAMKK…VNDFKDKSRY (188 aa). A ketoreductase (KR) domain region spans residues 2098-2266; it reads SYLLAGLTGD…KRGGVASVIH (169 aa). In terms of domain architecture, Carrier spans 2378-2456; the sequence is DEVLGVMQKC…DLCELACEEY (79 aa). S2416 bears the O-(pantetheine 4'-phosphoryl)serine mark.

It functions in the pathway polyketide biosynthesis. Functionally, reducing polyketide synthase; part of the gene cluster A that mediates the biosynthesis of botcinic acid and its botcinin derivatives, acetate-derived polyketides that contribute to virulence when combined with the sesquiterpene botrydial. Botcinic acid and its derivatives have been shown to induce chlorosis and necrosis during host plant infection, but also have antifungal activities. Two polyketide synthases, BOA6 and BOA9, are involved in the biosynthesis of botcinins. BOA6 mediates the formation of the per-methylated tetraketide core by condensation of four units of malonyl-CoA with one unit of acetyl-CoA, which would be methylated in activated methylene groups to yield a bicyclic acid intermediate that could then either be converted to botrylactone derivatives or lose the starter acetate unit through a retro-Claisen type C-C bond cleavage to yield botcinin derivatives. The second polyketide synthase, BOA9, is probably required for the biosynthesis of the tetraketide side chain of botcinins. The methyltransferase (MT) domain within BOA6 is probably responsible for the incorporation of four methyl groups. The trans-enoyl reductase BOA5 might take over the enoyl reductase function of BOA6 that misses an ER domain. The monooxygenases BOA2, BOA3 and BOA4 might be involved in further hydroxylations at C4, C5 and C8, whereas BOA7, close to BOA9, could potentially be involved in the hydroxylation at C4 in the side chain of botcinins. This chain is Reducing polyketide synthase BOA6, found in Botryotinia fuckeliana (strain B05.10) (Noble rot fungus).